Reading from the N-terminus, the 213-residue chain is Ribonuclease HII (213 aa).

In terms of domain architecture, RNase H type-2 spans Met1–Gln206. Residues Asp6, Glu7, and Asp101 each coordinate a divalent metal cation.

The protein belongs to the RNase HII family. It depends on Mn(2+) as a cofactor. Mg(2+) is required as a cofactor.

It is found in the cytoplasm. The catalysed reaction is Endonucleolytic cleavage to 5'-phosphomonoester.. Functionally, endonuclease that specifically degrades the RNA of RNA-DNA hybrids. In Methanoregula boonei (strain DSM 21154 / JCM 14090 / 6A8), this protein is Ribonuclease HII.